The following is a 124-amino-acid chain: Putative iron-sulfur cluster insertion protein ErpA (124 aa).

Residues C49, C113, and C115 each coordinate iron-sulfur cluster.

Belongs to the HesB/IscA family. Homodimer. Iron-sulfur cluster is required as a cofactor.

Required for insertion of 4Fe-4S clusters. This chain is Putative iron-sulfur cluster insertion protein ErpA, found in Acidovorax sp. (strain JS42).